The chain runs to 160 residues: MAVIKKPDLTDPVLRAKLAKGMGHNYYGEPAWPNDLLYMFPVVIFGSFACVIGLAVLDPAAVGEPANPFATPLEILPEWYFYPTFQLLRTVPNKLLGVLLMAAVPAGLLTVPFIENINKFQNPFRRPIATTVFLIGTFAAIWLGIGACLPIDISLTLGLF.

3 consecutive transmembrane segments (helical) span residues 36–56 (LLYM…GLAV), 95–115 (LLGV…PFIE), and 131–151 (TVFL…CLPI).

It belongs to the cytochrome b family. PetD subfamily. The 4 large subunits of the cytochrome b6-f complex are cytochrome b6, subunit IV (17 kDa polypeptide, petD), cytochrome f and the Rieske protein, while the 4 small subunits are petG, petL, petM and petN. The complex functions as a dimer.

It localises to the plastid. Its subcellular location is the chloroplast thylakoid membrane. Component of the cytochrome b6-f complex, which mediates electron transfer between photosystem II (PSII) and photosystem I (PSI), cyclic electron flow around PSI, and state transitions. This Tupiella akineta (Green alga) protein is Cytochrome b6-f complex subunit 4.